Here is a 295-residue protein sequence, read N- to C-terminus: Small ribosomal subunit biogenesis GTPase RsgA (295 aa).

A CP-type G domain is found at 68–228; the sequence is KNLLVKPHVA…VVDTPGFANL (161 aa). Residues 117 to 120 and 170 to 178 each bind GTP; these read NKMD and GLSGVGKSS. The Zn(2+) site is built by Cys-250, Cys-255, His-257, and Cys-263.

The protein belongs to the TRAFAC class YlqF/YawG GTPase family. RsgA subfamily. Monomer. Associates with 30S ribosomal subunit, binds 16S rRNA. The cofactor is Zn(2+).

Its subcellular location is the cytoplasm. In terms of biological role, one of several proteins that assist in the late maturation steps of the functional core of the 30S ribosomal subunit. Helps release RbfA from mature subunits. May play a role in the assembly of ribosomal proteins into the subunit. Circularly permuted GTPase that catalyzes slow GTP hydrolysis, GTPase activity is stimulated by the 30S ribosomal subunit. In Thermotoga neapolitana (strain ATCC 49049 / DSM 4359 / NBRC 107923 / NS-E), this protein is Small ribosomal subunit biogenesis GTPase RsgA.